The following is a 347-amino-acid chain: tRNA pseudouridine synthase D (347 aa).

The active-site Nucleophile is the aspartate 78. The TRUD domain maps to 150 to 304 (GLPNFFGPQR…AEGTRRAARL (155 aa)).

It belongs to the pseudouridine synthase TruD family.

The enzyme catalyses uridine(13) in tRNA = pseudouridine(13) in tRNA. Responsible for synthesis of pseudouridine from uracil-13 in transfer RNAs. The protein is tRNA pseudouridine synthase D of Anaeromyxobacter dehalogenans (strain 2CP-C).